The primary structure comprises 623 residues: Peptide transporter PTR2 (623 aa).

2 disordered regions span residues 1–20 (MVSS…VLTD) and 31–58 (DYED…TPQE). The next 11 membrane-spanning stretches (helical) occupy residues 134 to 154 (ALTN…GYLG), 163 to 183 (AIQW…FASI), 191 to 211 (NAGL…SGLM), 250 to 270 (ITNV…ATSY), 277 to 297 (FWLA…FLFI), 385 to 405 (IIFN…IGAM), 418 to 438 (FNPL…YPLL), 448 to 468 (IWRI…GFVL), 499 to 519 (LFIL…ELAY), 529 to 549 (LVYA…LAIT), and 557 to 577 (LHWV…VMLA).

Belongs to the major facilitator superfamily. Proton-dependent oligopeptide transporter (POT/PTR) (TC 2.A.17) family.

The protein localises to the membrane. In terms of biological role, uptake of small peptides. The polypeptide is Peptide transporter PTR2 (PTR2) (Candida albicans (Yeast)).